The sequence spans 218 residues: C-type lectin domain family 2 member H (218 aa).

Over 1-52 (MNAAKVETSSMGMLQRADLTAADCLQEGEMGKKIQGKCFRIISTVSPVKLYC) the chain is Cytoplasmic. The helical; Signal-anchor for type II membrane protein transmembrane segment at 53-73 (CYGVIMVLTVAVIALSVALSV) threads the bilayer. Residues 74-218 (RNKIPAMEDR…SRVGSVPRHV (145 aa)) lie on the Extracellular side of the membrane. C90 and C101 form a disulfide bridge. In terms of domain architecture, C-type lectin spans 97 to 201 (FGSKCFYFSE…SYTHRKWICS (105 aa)). N-linked (GlcNAc...) asparagine glycosylation is present at N110. A disulfide bridge links C118 with C200.

In terms of tissue distribution, detected in ileum, liver, kidney and in IL2-activated natural killer cells.

The protein resides in the cell membrane. Lectin-type cell surface receptor. This is C-type lectin domain family 2 member H (Clec2h) from Mus musculus (Mouse).